The primary structure comprises 438 residues: Fumarate hydratase class II (438 aa).

Residues 76–78 (SGT), 101–104 (HPND), 111–113 (SSN), and Thr-159 each bind substrate. The active-site Proton donor/acceptor is the His-160. Ser-291 is an active-site residue. Residues Ser-292 and 297–299 (KTN) each bind substrate.

It belongs to the class-II fumarase/aspartase family. Fumarase subfamily. As to quaternary structure, homotetramer.

The protein resides in the cytoplasm. It catalyses the reaction (S)-malate = fumarate + H2O. The protein operates within carbohydrate metabolism; tricarboxylic acid cycle; (S)-malate from fumarate: step 1/1. Its function is as follows. Involved in the TCA cycle. Catalyzes the stereospecific interconversion of fumarate to L-malate. The chain is Fumarate hydratase class II from Saccharolobus solfataricus (strain ATCC 35092 / DSM 1617 / JCM 11322 / P2) (Sulfolobus solfataricus).